A 476-amino-acid chain; its full sequence is Bifunctional protein HldE (476 aa).

Residues Met1 to Gly320 are ribokinase. Asn196–Glu199 contacts ATP. The active site involves Asp265. The cytidylyltransferase stretch occupies residues Phe345–Asp476.

The protein in the N-terminal section; belongs to the carbohydrate kinase PfkB family. In the C-terminal section; belongs to the cytidylyltransferase family. As to quaternary structure, homodimer.

The enzyme catalyses D-glycero-beta-D-manno-heptose 7-phosphate + ATP = D-glycero-beta-D-manno-heptose 1,7-bisphosphate + ADP + H(+). It catalyses the reaction D-glycero-beta-D-manno-heptose 1-phosphate + ATP + H(+) = ADP-D-glycero-beta-D-manno-heptose + diphosphate. It functions in the pathway nucleotide-sugar biosynthesis; ADP-L-glycero-beta-D-manno-heptose biosynthesis; ADP-L-glycero-beta-D-manno-heptose from D-glycero-beta-D-manno-heptose 7-phosphate: step 1/4. The protein operates within nucleotide-sugar biosynthesis; ADP-L-glycero-beta-D-manno-heptose biosynthesis; ADP-L-glycero-beta-D-manno-heptose from D-glycero-beta-D-manno-heptose 7-phosphate: step 3/4. In terms of biological role, catalyzes the phosphorylation of D-glycero-D-manno-heptose 7-phosphate at the C-1 position to selectively form D-glycero-beta-D-manno-heptose-1,7-bisphosphate. Its function is as follows. Catalyzes the ADP transfer from ATP to D-glycero-beta-D-manno-heptose 1-phosphate, yielding ADP-D-glycero-beta-D-manno-heptose. The protein is Bifunctional protein HldE of Alcanivorax borkumensis (strain ATCC 700651 / DSM 11573 / NCIMB 13689 / SK2).